We begin with the raw amino-acid sequence, 140 residues long: Oleosin Cor a 13 (140 aa).

A run of 2 helical transmembrane segments spans residues 31 to 51 (GSLL…LTLA) and 75 to 95 (GFLA…WIYR).

It belongs to the oleosin family. Expressed in seeds.

Its subcellular location is the lipid droplet. The protein resides in the membrane. Its function is as follows. May have a structural role to stabilize the lipid body during desiccation of the seed by preventing coalescence of the oil. Probably interacts with both lipid and phospholipid moieties of lipid bodies. May also provide recognition signals for specific lipase anchorage in lipolysis during seedling growth. The chain is Oleosin Cor a 13 from Corylus avellana (European hazel).